We begin with the raw amino-acid sequence, 395 residues long: Accessory Sec system protein translocase subunit SecY2 (395 aa).

The next 10 helical transmembrane spans lie at 13 to 33 (VSFS…PLPF), 63 to 83 (ISIF…IQLL), 102 to 122 (LMQF…VFAF), 128 to 148 (GLED…VVWL), 157 to 177 (VGAS…PNII), 190 to 210 (WIWL…WLAF), 239 to 259 (MAAM…LMVG), 272 to 292 (VFQA…FTFV), 326 to 346 (LIWI…VFGL), and 355 to 375 (YAGF…MGGI).

It belongs to the SecY/SEC61-alpha family. SecY2 subfamily. In terms of assembly, component of the accessory SecA2/SecY2 protein translocase complex required to export cell wall proteins. May form heterotrimers with SecE and SecG subunits.

It is found in the cell membrane. Part of the accessory SecA2/SecY2 system specifically required for export of possible cell wall proteins. The central subunit of a protein translocation channel. The protein is Accessory Sec system protein translocase subunit SecY2 of Lactobacillus johnsonii (strain CNCM I-12250 / La1 / NCC 533).